A 92-amino-acid polypeptide reads, in one-letter code: Probable Fe(2+)-trafficking protein (92 aa).

The protein belongs to the Fe(2+)-trafficking protein family.

Its function is as follows. Could be a mediator in iron transactions between iron acquisition and iron-requiring processes, such as synthesis and/or repair of Fe-S clusters in biosynthetic enzymes. This Shewanella baltica (strain OS223) protein is Probable Fe(2+)-trafficking protein.